The chain runs to 392 residues: MIIHSLLDTDLYKFTMMQAVLHQHPAAQVDYRFKCRTPGVDLAQFIDEISREIDALCRLRLREDEVDYLRSLRFIKPDFADFLALFHLDRKYLSLTASATHPGEIELTIRGPWLHTILFEVPLLAIINEVWFRNTSEPDFEEGRSRLREKVASLRSMPAGCKIADYGTRRRYSRQWHGELLPLLRDGLGEQFVGTSNVYFAKQYGLTPLGTMAHEYLQAFQALGPRLRDSQVAALESWAREYRGDLGIALSDVVGLDAFLRDFDLYFCKLFDGMRHDSGDPFEWGERVIAHLEAHRVDPRTKVLVFSDGLNIDKVMRLYQHFHTRCRLAFGVGTSLTNDLGPTPLQIVIKMVRCNGQPVAKLSDSPGKSMCEDIGYLRYLRDVFGLPPMAET.

Phosphohistidine; by autocatalysis is present on His214.

The protein belongs to the NAPRTase family. Post-translationally, transiently phosphorylated on a His residue during the reaction cycle. Phosphorylation strongly increases the affinity for substrates and increases the rate of nicotinate D-ribonucleotide production. Dephosphorylation regenerates the low-affinity form of the enzyme, leading to product release.

The enzyme catalyses nicotinate + 5-phospho-alpha-D-ribose 1-diphosphate + ATP + H2O = nicotinate beta-D-ribonucleotide + ADP + phosphate + diphosphate. Its pathway is cofactor biosynthesis; NAD(+) biosynthesis; nicotinate D-ribonucleotide from nicotinate: step 1/1. Catalyzes the synthesis of beta-nicotinate D-ribonucleotide from nicotinate and 5-phospho-D-ribose 1-phosphate at the expense of ATP. The polypeptide is Nicotinate phosphoribosyltransferase (Xanthomonas axonopodis pv. citri (strain 306)).